We begin with the raw amino-acid sequence, 260 residues long: 3'-5' ssDNA/RNA exonuclease TatD (260 aa).

A divalent metal cation is bound by residues glutamate 92, histidine 128, and histidine 153.

The protein belongs to the metallo-dependent hydrolases superfamily. TatD-type hydrolase family. TatD subfamily. Monomer. Requires Mg(2+) as cofactor.

The protein localises to the cytoplasm. 3'-5' exonuclease that prefers single-stranded DNA and RNA. May play a role in the H(2)O(2)-induced DNA damage repair. In Yersinia pseudotuberculosis serotype O:3 (strain YPIII), this protein is 3'-5' ssDNA/RNA exonuclease TatD.